Consider the following 188-residue polypeptide: Elongation factor P (188 aa).

This sequence belongs to the elongation factor P family.

Its subcellular location is the cytoplasm. It functions in the pathway protein biosynthesis; polypeptide chain elongation. In terms of biological role, involved in peptide bond synthesis. Stimulates efficient translation and peptide-bond synthesis on native or reconstituted 70S ribosomes in vitro. Probably functions indirectly by altering the affinity of the ribosome for aminoacyl-tRNA, thus increasing their reactivity as acceptors for peptidyl transferase. This Chlorobaculum parvum (strain DSM 263 / NCIMB 8327) (Chlorobium vibrioforme subsp. thiosulfatophilum) protein is Elongation factor P.